A 375-amino-acid chain; its full sequence is Leucoanthocyanidin dioxygenase 1 (375 aa).

In terms of domain architecture, Fe2OG dioxygenase spans 218–317 (LLLQLKINYY…RLSWVVFCEP (100 aa)). Positions 242, 244, and 298 each coordinate Fe cation. 2-oxoglutarate is bound at residue Arg308.

The protein belongs to the iron/ascorbate-dependent oxidoreductase family. L-ascorbate serves as cofactor. Fe(2+) is required as a cofactor.

The catalysed reaction is a (2R,3S,4S)-leucoanthocyanidin + 2-oxoglutarate + O2 = a 4-H-anthocyanidin with a 3-hydroxy group + succinate + CO2 + 2 H2O. It participates in pigment biosynthesis; anthocyanin biosynthesis. Its function is as follows. Involved in anthocyanin and protoanthocyanidin biosynthesis by catalyzing the oxidation of leucoanthocyanidins into anthocyanidins. Is able to synthesize anthocyanin pigments from leucoanthocyanidins in aleurone tissue. Converts dihydroquercetin to quercetin in vitro. This Oryza sativa subsp. indica (Rice) protein is Leucoanthocyanidin dioxygenase 1.